The primary structure comprises 35 residues: Pheromone-binding protein 1 (35 aa).

Belongs to the PBP/GOBP family. Homodimer. Antenna.

In terms of biological role, this major soluble protein in olfactory sensilla of male moths might serve to solubilize the extremely hydrophobic pheromone molecules and to transport pheromone through the aqueous lymph to receptors located on olfactory cilia. The chain is Pheromone-binding protein 1 from Lymantria dispar (Gypsy moth).